We begin with the raw amino-acid sequence, 69 residues long: Conopeptide Y-Fe1 (69 aa).

The N-terminal stretch at 1–20 (MSKLGVVLFVFLLLLPLAAP) is a signal peptide. Residues 21-69 (QPVGDQPADQPADRNAEARGTYLYPFSYYRLWRYFTRFLHKQPYYYVHI) constitute a propeptide that is removed on maturation.

Belongs to the conotoxin M superfamily. Conopeptide Y family. As to expression, expressed by the venom duct.

It localises to the secreted. Tyrosine-rich conopeptide that specifically targets voltage-gated potassium channel Kv1.6/KCNA6 (IC(50) is 8.8 uM) that is expressed in Xenopus oocytes. In vivo, causes seizures (at 5 nmol) and death (20 nmol) when intracranially injected into mice, and causes paralysis (at 10 pmol) to C.elegans. The polypeptide is Conopeptide Y-Fe1 (Conus ferrugineus (Cone snail)).